A 327-amino-acid polypeptide reads, in one-letter code: GMP reductase (327 aa).

Cys-176 serves as the catalytic Thioimidate intermediate. 205–228 is an NADP(+) binding site; that stretch reads IIADGGIRTHGDIAKSIRFGASMV.

It belongs to the IMPDH/GMPR family. GuaC type 2 subfamily.

The enzyme catalyses IMP + NH4(+) + NADP(+) = GMP + NADPH + 2 H(+). Catalyzes the irreversible NADPH-dependent deamination of GMP to IMP. It functions in the conversion of nucleobase, nucleoside and nucleotide derivatives of G to A nucleotides, and in maintaining the intracellular balance of A and G nucleotides. The polypeptide is GMP reductase (Streptococcus pyogenes serotype M1).